Reading from the N-terminus, the 428-residue chain is Histidine--tRNA ligase (428 aa).

The protein belongs to the class-II aminoacyl-tRNA synthetase family. In terms of assembly, homodimer.

The protein resides in the cytoplasm. It carries out the reaction tRNA(His) + L-histidine + ATP = L-histidyl-tRNA(His) + AMP + diphosphate + H(+). In Azotobacter vinelandii (strain DJ / ATCC BAA-1303), this protein is Histidine--tRNA ligase.